The following is a 172-amino-acid chain: Shikimate kinase (172 aa).

11 to 16 (GAGKST) contacts ATP. Serine 15 lines the Mg(2+) pocket. Aspartate 33, arginine 57, and glycine 79 together coordinate substrate. Arginine 117 lines the ATP pocket. Arginine 136 contacts substrate. Position 153 (arginine 153) interacts with ATP.

It belongs to the shikimate kinase family. Monomer. Requires Mg(2+) as cofactor.

It is found in the cytoplasm. It catalyses the reaction shikimate + ATP = 3-phosphoshikimate + ADP + H(+). It participates in metabolic intermediate biosynthesis; chorismate biosynthesis; chorismate from D-erythrose 4-phosphate and phosphoenolpyruvate: step 5/7. In terms of biological role, catalyzes the specific phosphorylation of the 3-hydroxyl group of shikimic acid using ATP as a cosubstrate. The sequence is that of Shikimate kinase from Pseudomonas paraeruginosa (strain DSM 24068 / PA7) (Pseudomonas aeruginosa (strain PA7)).